The following is a 143-amino-acid chain: Large ribosomal subunit protein uL11 (143 aa).

Belongs to the universal ribosomal protein uL11 family. Part of the ribosomal stalk of the 50S ribosomal subunit. Interacts with L10 and the large rRNA to form the base of the stalk. L10 forms an elongated spine to which L12 dimers bind in a sequential fashion forming a multimeric L10(L12)X complex. In terms of processing, one or more lysine residues are methylated.

In terms of biological role, forms part of the ribosomal stalk which helps the ribosome interact with GTP-bound translation factors. This is Large ribosomal subunit protein uL11 from Caulobacter vibrioides (strain ATCC 19089 / CIP 103742 / CB 15) (Caulobacter crescentus).